The following is a 742-amino-acid chain: Collectin-12 (742 aa).

Residues 1–37 lie on the Cytoplasmic side of the membrane; sequence MKDDFAEEEEVQSFGYKRFGIQEGTQCTKCKNNWALK. The helical; Signal-anchor for type II membrane protein transmembrane segment at 38-58 threads the bilayer; sequence FSIVLLYILCALLTITVAILG. The Extracellular segment spans residues 59-742; sequence YKVVEKMDNV…EREAVPSSIL (684 aa). N-linked (GlcNAc...) asparagine glycosylation occurs at asparagine 67. Positions 73 to 142 form a coiled coil; it reads ETSHQTYDNK…KDTLEKLQAN (70 aa). 2 N-linked (GlcNAc...) asparagine glycosylation sites follow: asparagine 159 and asparagine 168. A coiled-coil region spans residues 205–254; the sequence is NLNNLNLTQVQQRNLISNLQQSVDDTSLAIQRIKNDFQNLQQVFLQAKKD. A glycan (N-linked (GlcNAc...) asparagine) is linked at asparagine 271. Residues 439–608 are disordered; sequence TILQGPPGPR…TPASEVNGCP (170 aa). 2 Collagen-like domains span residues 452–511 and 527–586; these read GDRG…KGSR and GPPG…PGPS. Residues 501 to 514 show a composition bias toward low complexity; that stretch reads SKGSQGPKGSRGSP. Over residues 516-532 the composition is skewed to pro residues; the sequence is KPGPQGPSGDPGPPGPP. Residues 534-556 show a composition bias toward low complexity; it reads KDGLPGPQGPPGFQGLQGTVGEP. Over residues 571–585 the composition is skewed to pro residues; sequence PGMPGPKGPPGPPGP. 3 disulfide bridges follow: cysteine 607–cysteine 618, cysteine 635–cysteine 730, and cysteine 708–cysteine 722. The C-type lectin domain maps to 614–731; it reads FTDKCYYFSL…CDEINNFICE (118 aa). Ca(2+) contacts are provided by phenylalanine 644, asparagine 646, glutamate 650, aspartate 670, and glutamate 674. Residues lysine 691, glutamine 694, and aspartate 696 each coordinate a carbohydrate. Ca(2+) is bound by residues glutamine 694, aspartate 696, asparagine 697, glutamate 706, aspartate 707, asparagine 718, aspartate 719, and glutamate 731. A carbohydrate is bound at residue glutamate 706. The a carbohydrate site is built by asparagine 718 and aspartate 719.

The extracellular domain forms a stable trimer. The extracellular domain interacts with fibrillar amyloid-beta peptide. As to expression, expressed in vascular endothelial cells in the heart, in perivascular macrophage and smooth muscle cells. Expressed in plaques-surrounding reactive astrocytes located in cerebral cortex and hippocampus and in leptomeningeal vessels showing characteristics of cerebral amyloid angiopathy (CAA) in a double transgenic mouse model of Alzheimer disease (at protein level). Strongly expressed in lung. Moderately expressed in heart, skeletal muscle, spleen, liver, brain, colon, testis, stomach and kidney. Expressed in neonatal astrocytes. Expressed in reactive astrocytes and vascular/perivascular cells in the brain of a double transgenic mouse model of Alzheimer disease.

The protein localises to the membrane. Functionally, scavenger receptor that displays several functions associated with host defense. Promotes binding and phagocytosis of Gram-positive, Gram-negative bacteria and yeast. Also binds to sialyl Lewis X or a trisaccharide and asialo-orosomucoid (ASOR). Mediates the recognition, internalization and degradation of oxidatively modified low density lipoprotein (oxLDL) by vascular endothelial cells. Binds to several carbohydrates including Gal-type ligands, D-galactose, L- and D-fucose, GalNAc, T and Tn antigens in a calcium-dependent manner and internalizes specifically GalNAc in nurse-like cells. This Mus musculus (Mouse) protein is Collectin-12 (Colec12).